The chain runs to 86 residues: Muscarinic toxin 38 (86 aa).

The signal sequence occupies residues 1–21 (MKTLLLTLVVVTIVCLDLGYT). 4 disulfide bridges follow: C24–C45, C38–C63, C67–C78, and C79–C84.

Belongs to the three-finger toxin family. Short-chain subfamily. Aminergic toxin sub-subfamily. In terms of assembly, monomer. Expressed by the venom gland.

It is found in the secreted. Binds to the muscarinic acetylcholine receptor (CHRM). In Ophiophagus hannah (King cobra), this protein is Muscarinic toxin 38.